The following is a 330-amino-acid chain: Ribosomal RNA small subunit methyltransferase C (330 aa).

Belongs to the methyltransferase superfamily. RsmC family. Monomer.

It is found in the cytoplasm. It carries out the reaction guanosine(1207) in 16S rRNA + S-adenosyl-L-methionine = N(2)-methylguanosine(1207) in 16S rRNA + S-adenosyl-L-homocysteine + H(+). Functionally, specifically methylates the guanine in position 1207 of 16S rRNA in the 30S particle. In Haemophilus influenzae (strain PittGG), this protein is Ribosomal RNA small subunit methyltransferase C.